The chain runs to 662 residues: Polyunsaturated fatty acid lipoxygenase ALOX15 (662 aa).

The 113-residue stretch at G2–R114 folds into the PLAT domain. Residues T115–I662 enclose the Lipoxygenase domain. The Fe cation site is built by H360, H365, H540, H544, and I662.

This sequence belongs to the lipoxygenase family. In terms of assembly, interacts with PEBP1; in response to IL13/interleukin-13, prevents the interaction of PEBP1 with RAF1 to activate the ERK signaling cascade. Fe cation is required as a cofactor.

It is found in the cytoplasm. Its subcellular location is the cytosol. The protein resides in the cell membrane. It localises to the lipid droplet. It catalyses the reaction (5Z,8Z,11Z,14Z)-eicosatetraenoate + O2 = (12S)-hydroperoxy-(5Z,8Z,10E,14Z)-eicosatetraenoate. The catalysed reaction is (9Z,12Z)-octadecadienoate + O2 = (13S)-hydroperoxy-(9Z,11E)-octadecadienoate. The enzyme catalyses (5Z,8Z,11Z,14Z)-eicosatetraenoate + O2 = (15S)-hydroperoxy-(5Z,8Z,11Z,13E)-eicosatetraenoate. It carries out the reaction (5Z,8Z,11Z,14Z)-eicosatetraenoate + 2 O2 = (14R,15S)-dihydroperoxy-(5Z,8Z,10E,12E)-eicosatetraenoate. It catalyses the reaction (5Z,8Z,11Z,14Z)-eicosatetraenoate + 2 O2 = (8S,15S)-dihydroperoxy-(5Z,9E,11Z,13E)-eicosatetraenoate. The catalysed reaction is (14S,15R)-epoxy-(5Z,8Z,11Z)-eicosatrienoate + O2 = (8S)-hydroperoxy-(14S,15R)-epoxy-(5Z,9E,11Z)-eicosatrienoate. The enzyme catalyses (14S,15R)-epoxy-(5Z,8Z,11Z)-eicosatrienoate + O2 = (12S)-hydroperoxy-(14S,15R)-epoxy-(5Z,8Z,10E)-eicosatrienoate. It carries out the reaction (14R,15S)-epoxy-(5Z,8Z,11Z)-eicosatrienoate + O2 = (5S)-hydroperoxy-(14R,15S)-epoxy-(6E,8Z,11Z)-eicosatrienoate. It catalyses the reaction (14R,15S)-epoxy-(5Z,8Z,11Z)-eicosatrienoate + O2 = (12S)-hydroperoxy-(14R,15S)-epoxy-(5Z,8Z,10E)-eicosatrienoate. The catalysed reaction is (15R)-hydroperoxy-(5Z,8Z,11Z,13E)-eicosatetraenoate = 15-oxo-(5Z,8Z,11Z,13E)-eicosatetraenoate + H2O. The enzyme catalyses (15S)-hydroperoxy-(5Z,8Z,11Z,13E)-eicosatetraenoate = (14S,15S)-epoxy-(5Z,8Z,10E,12E)-eicosatetraenoate + H2O. It carries out the reaction (12S)-hydroperoxy-(5Z,8Z,10E,14Z)-eicosatetraenoate = (8S)-hydroxy-(11S,12S)-epoxy-(5Z,9E,14Z)-eicosatrienoate. It catalyses the reaction (4Z,7Z,10Z,13Z,16Z)-docosapentaenoate + O2 = 14-hydroperoxy-(4Z,7Z,10Z,12E,16Z)-docosapentaenoate. The catalysed reaction is (7Z,10Z,13Z,16Z,19Z)-docosapentaenoate + O2 = 14-hydroperoxy-(7Z,10Z,12E,16Z,19Z)-docosapentaenoate. The enzyme catalyses (4Z,7Z,10Z,13Z,16Z,19Z)-docosahexaenoate + O2 = (14S)-hydroperoxy-(4Z,7Z,10Z,12E,16Z,19Z)-docosahexaenoate. It carries out the reaction (4Z,7Z,10Z,13Z,16Z,19Z)-docosahexaenoate + O2 = (17S)-hydroperoxy-(4Z,7Z,10Z,13Z,15E,19Z)-docosahexaenoate. It catalyses the reaction (7S)-hydroperoxy-(4Z,8E,10Z,13Z,16Z,19Z)-docosahexaenoate + O2 = (7S,14S)-dihydroperoxy-(4Z,8E,10Z,12E,16Z,19Z)-docosahexaenoate. The catalysed reaction is (7S)-hydroperoxy-(4Z,8E,10Z,13Z,16Z,19Z)-docosahexaenoate + O2 = (7S,17S)-dihydroperoxy-(4Z,8E,10Z,13Z,15E,19Z)-docosahexaenoate. The enzyme catalyses (4Z,7Z,10Z,13Z,16Z,19Z)-docosahexaenoate + O2 = (11S)-hydroperoxy-(4Z,7Z,9E,13Z,16Z,19Z)-docosahexaenoate. It carries out the reaction N-(5Z,8Z,11Z,14Z)-eicosatetraenoyl-taurine + O2 = N-(12S)-hydroperoxy-(5Z,8Z,10E,14Z)-eicosatetraenoyl-taurine. It catalyses the reaction N-(5Z,8Z,11Z,14Z)-eicosatetraenoyl-gamma-aminobutanoate + O2 = N-(12S)-hydroperoxy-(5Z,8Z,10E,14Z)-eicosatetraenoyl-gamma-aminobutanoate. The catalysed reaction is N-(5Z,8Z,11Z,14Z)-eicosatetraenoyl-glycine + O2 = N-(12S)-hydroperoxy-(5Z,8Z,10E,14Z)-eicosatetraenoyl-glycine. The enzyme catalyses N-(5Z,8Z,11Z,14Z)-eicosatetraenoyl-L-alanine + O2 = N-(12S)-hydroperoxy-(5Z,8Z,10E,14Z)-eicosatetraenoyl-alanine. It carries out the reaction N-(5Z,8Z,11Z,14Z)-eicosatetraenoyl-taurine + O2 = N-(15S)-hydroperoxy-(5Z,8Z,11Z,13E)-eicosatetraenoyl-taurine. It catalyses the reaction N-(5Z,8Z,11Z,14Z)-eicosatetraenoyl-gamma-aminobutanoate + O2 = N-(15S)-hydroperoxy-(5Z,8Z,11Z,13E)-eicosatetraenoyl-gamma-aminobutanoate. The catalysed reaction is N-(5Z,8Z,11Z,14Z)-eicosatetraenoyl-glycine + O2 = N-(15S)-hydroperoxy-(5Z,8Z,11Z,13E)-eicosatetraenoyl-glycine. The enzyme catalyses N-(5Z,8Z,11Z,14Z)-eicosatetraenoyl-L-alanine + O2 = N-(15S)-hydroperoxy-(5Z,8Z,11Z,13E)-eicosatetraenoyl-alanine. It participates in lipid metabolism; hydroperoxy eicosatetraenoic acid biosynthesis. In terms of biological role, non-heme iron-containing dioxygenase that catalyzes the stereo-specific peroxidation of free and esterified polyunsaturated fatty acids generating a spectrum of bioactive lipid mediators. It inserts peroxyl groups at C12 or C15 of arachidonate ((5Z,8Z,11Z,14Z)-eicosatetraenoate) producing both 12-hydroperoxyeicosatetraenoate/12-HPETE and 15-hydroperoxyeicosatetraenoate/15-HPETE. It may then act on 12-HPETE to produce hepoxilins, which may show pro-inflammatory properties. Can also peroxidize linoleate ((9Z,12Z)-octadecadienoate) to 13-hydroperoxyoctadecadienoate. May participate in the sequential oxidations of DHA ((4Z,7Z,10Z,13Z,16Z,19Z)-docosahexaenoate) to generate specialized pro-resolving mediators (SPMs)like resolvin D5 ((7S,17S)-diHPDHA) and (7S,14S)-diHPDHA, that actively down-regulate the immune response and have anti-aggregation properties with platelets. Can convert epoxy fatty acids to hydroperoxy-epoxides derivatives followed by an intramolecular nucleophilic substitution leading to the formation of monocyclic endoperoxides. Plays an important role during the maintenance of self-tolerance by peroxidizing membrane-bound phosphatidylethanolamine which can then signal the sorting process for clearance of apoptotic cells during inflammation and prevent an autoimmune response. In addition to its role in the immune and inflammatory responses, this enzyme may play a role in epithelial wound healing in the cornea through production of lipoxin A4 (LXA(4)) and docosahexaenoic acid-derived neuroprotectin D1 (NPD1; 10R,17S-HDHA), both lipid autacoids exhibit anti-inflammatory and neuroprotective properties. Furthermore, it may regulate actin polymerization which is crucial for several biological processes such as the phagocytosis of apoptotic cells. It is also implicated in the generation of endogenous ligands for peroxisome proliferator activated receptor (PPAR-gamma), hence modulating macrophage development and function. It may also exert a negative effect on skeletal development by regulating bone mass through this pathway. As well as participates in ER stress and downstream inflammation in adipocytes, pancreatic islets, and liver. Finally, it is also involved in the cellular response to IL13/interleukin-13. The protein is Polyunsaturated fatty acid lipoxygenase ALOX15 of Pongo abelii (Sumatran orangutan).